The following is a 119-amino-acid chain: Holo-[acyl-carrier-protein] synthase (119 aa).

The Mg(2+) site is built by Asp-7 and Glu-56.

This sequence belongs to the P-Pant transferase superfamily. AcpS family. It depends on Mg(2+) as a cofactor.

The protein localises to the cytoplasm. It carries out the reaction apo-[ACP] + CoA = holo-[ACP] + adenosine 3',5'-bisphosphate + H(+). Its function is as follows. Transfers the 4'-phosphopantetheine moiety from coenzyme A to a Ser of acyl-carrier-protein. The polypeptide is Holo-[acyl-carrier-protein] synthase (Chlamydia trachomatis serovar L2 (strain ATCC VR-902B / DSM 19102 / 434/Bu)).